Reading from the N-terminus, the 269-residue chain is Polyamine aminopropyltransferase (269 aa).

Positions 1 to 226 (MVWFFEYYDG…ALWSFIIGGE (226 aa)) constitute a PABS domain. Residue glutamine 28 coordinates S-methyl-5'-thioadenosine. Spermidine is bound by residues histidine 59 and aspartate 83. Residues aspartate 102 and 133 to 134 (DG) contribute to the S-methyl-5'-thioadenosine site. Aspartate 150 (proton acceptor) is an active-site residue. Position 150-153 (150-153 (DSTD)) interacts with spermidine.

It belongs to the spermidine/spermine synthase family. Homodimer or homotetramer.

It localises to the cytoplasm. The catalysed reaction is S-adenosyl 3-(methylsulfanyl)propylamine + putrescine = S-methyl-5'-thioadenosine + spermidine + H(+). The protein operates within amine and polyamine biosynthesis; spermidine biosynthesis; spermidine from putrescine: step 1/1. Its function is as follows. Catalyzes the irreversible transfer of a propylamine group from the amino donor S-adenosylmethioninamine (decarboxy-AdoMet) to putrescine (1,4-diaminobutane) to yield spermidine. In Archaeoglobus fulgidus (strain ATCC 49558 / DSM 4304 / JCM 9628 / NBRC 100126 / VC-16), this protein is Polyamine aminopropyltransferase.